We begin with the raw amino-acid sequence, 725 residues long: Ribosomal RNA large subunit methyltransferase K/L (725 aa).

Positions 46–157 (VAYRLCLWSR…RGQATLSLDL (112 aa)) constitute a THUMP domain.

The protein belongs to the methyltransferase superfamily. RlmKL family.

It is found in the cytoplasm. The enzyme catalyses guanosine(2445) in 23S rRNA + S-adenosyl-L-methionine = N(2)-methylguanosine(2445) in 23S rRNA + S-adenosyl-L-homocysteine + H(+). It carries out the reaction guanosine(2069) in 23S rRNA + S-adenosyl-L-methionine = N(2)-methylguanosine(2069) in 23S rRNA + S-adenosyl-L-homocysteine + H(+). Its function is as follows. Specifically methylates the guanine in position 2445 (m2G2445) and the guanine in position 2069 (m7G2069) of 23S rRNA. In Pseudomonas aeruginosa (strain ATCC 15692 / DSM 22644 / CIP 104116 / JCM 14847 / LMG 12228 / 1C / PRS 101 / PAO1), this protein is Ribosomal RNA large subunit methyltransferase K/L.